A 153-amino-acid chain; its full sequence is Ribosomal RNA large subunit methyltransferase H (153 aa).

Residues I75, G103, and 121 to 126 (LSAMTF) each bind S-adenosyl-L-methionine.

This sequence belongs to the RNA methyltransferase RlmH family. As to quaternary structure, homodimer.

The protein resides in the cytoplasm. The catalysed reaction is pseudouridine(1915) in 23S rRNA + S-adenosyl-L-methionine = N(3)-methylpseudouridine(1915) in 23S rRNA + S-adenosyl-L-homocysteine + H(+). Its function is as follows. Specifically methylates the pseudouridine at position 1915 (m3Psi1915) in 23S rRNA. The chain is Ribosomal RNA large subunit methyltransferase H from Helicobacter hepaticus (strain ATCC 51449 / 3B1).